Reading from the N-terminus, the 170-residue chain is Head completion protein (170 aa).

It localises to the virion. Head completion protein that closes the capsid once the viral DNA has been packaged. Probably part of the head-tail connector by binding to the portal protein and to the tail completion protein. The protein is Head completion protein of Escherichia coli (Enterobacteria phage T5).